A 337-amino-acid chain; its full sequence is Inositol 2-dehydrogenase (337 aa).

It belongs to the Gfo/Idh/MocA family. As to quaternary structure, homotetramer.

The enzyme catalyses myo-inositol + NAD(+) = scyllo-inosose + NADH + H(+). In terms of biological role, involved in the oxidation of myo-inositol (MI) to 2-keto-myo-inositol (2KMI or 2-inosose). This chain is Inositol 2-dehydrogenase, found in Burkholderia ambifaria (strain MC40-6).